Reading from the N-terminus, the 258-residue chain is 4,5-dihydroxyphthalate decarboxylase (258 aa).

To P.testosteroni DHP decarboxylase.

It catalyses the reaction 4,5-dihydroxyphthalate + H(+) = 3,4-dihydroxybenzoate + CO2. Its pathway is xenobiotic degradation; phthalate degradation; 3,4-dihydroxybenzoate from phthalate: step 3/3. The chain is 4,5-dihydroxyphthalate decarboxylase (pht5) from Pseudomonas putida (Arthrobacter siderocapsulatus).